The primary structure comprises 462 residues: Protein Tube (462 aa).

Positions 27 to 152 (YSRNTELRRV…SAADFVALDF (126 aa)) constitute a Death domain. The disordered stretch occupies residues 218–265 (RDKSVPQPSGNTPPIAPPRRQQRSTTNSNFATLTGTGTTSTTIPNVPN). Positions 249-259 (TLTGTGTTSTT) are enriched in low complexity. A run of 2 repeats spans residues 262-269 (NVPNLTIL) and 286-293 (NIPDLSIL). Positions 262 to 460 (NVPNLTILNP…ACNIPDLSEL (199 aa)) are 5 X approximate repeats. Polar residues predominate over residues 301–317 (RATVSDNPSNRTSSTDP). Residues 301-462 (RATVSDNPSN…NIPDLSELQQ (162 aa)) are disordered. Repeat 3 spans residues 319–326 (NIPRITLL). Over residues 342–354 (AKASTATTSTASS) the composition is skewed to low complexity. Polar residues predominate over residues 355–367 (NNLPMISALNISK). Repeat 4 spans residues 356–363 (NLPMISAL). Over residues 368 to 377 (GSRETLRPES) the composition is skewed to basic and acidic residues. A compositionally biased stretch (acidic residues) spans 387–403 (DDDDDNDGEEDGEEEYP). A compositionally biased stretch (low complexity) spans 409 to 424 (NLSNSEQQSSNNDSSL). A compositionally biased stretch (polar residues) spans 425 to 438 (TTVTGTSGDNSFEL). Low complexity predominate over residues 439–449 (TNDSSSTSNDD). Repeat unit 5 spans residues 453–460 (NIPDLSEL).

In terms of assembly, interacts (via Death domain) with pll (via Death domain). Post-translationally, phosphorylated by pll.

The protein resides in the cytoplasm. The protein localises to the cell membrane. In terms of biological role, plays an essential role in the Tl receptor signaling pathway that establishes embryonic dorsoventral polarity; the signal directs import of dl into ventral and ventrolateral nuclei, thereby establishing dorsoventral polarity. Tub recruits pll to the plasma membrane and protein-protein interaction activates pll. Also has a role in pupal pattern formation. In Drosophila melanogaster (Fruit fly), this protein is Protein Tube (tub).